The following is a 265-amino-acid chain: Histone H1 (265 aa).

The segment covering Met-1–Pro-27 has biased composition (low complexity). Disordered regions lie at residues Met-1–Glu-66, Ala-131–Gly-226, and Val-242–Lys-265. The span at Val-29–Thr-42 shows a compositional bias: basic and acidic residues. Basic residues predominate over residues Lys-43–Lys-55. The region spanning Ser-61 to Ala-130 is the H15 domain. The segment covering Pro-140–Ser-171 has biased composition (basic residues). Low complexity predominate over residues Lys-186 to Lys-202. The segment covering Ala-203 to Lys-215 has biased composition (basic residues). The segment covering Val-216–Gly-226 has biased composition (low complexity).

Belongs to the histone H1/H5 family.

The protein resides in the nucleus. It is found in the chromosome. Functionally, histones H1 are necessary for the condensation of nucleosome chains into higher-order structures. The polypeptide is Histone H1 (Pisum sativum (Garden pea)).